Consider the following 360-residue polypeptide: Heme A synthase (360 aa).

The next 5 membrane-spanning stretches (helical) occupy residues 13–33 (AVRW…LVGG), 99–119 (LLGR…LWRG), 129–149 (LWLL…MVAS), 160–180 (YRLA…VWTV), and 199–219 (SALL…VAGL). Position 263 (His-263) interacts with heme. Helical transmembrane passes span 265–282 (MTAY…FDAV), 292–312 (GALW…LTLL), and 315–335 (VPIG…TLAV). Residue His-323 coordinates heme.

The protein belongs to the COX15/CtaA family. Type 2 subfamily. In terms of assembly, interacts with CtaB. Heme b serves as cofactor.

Its subcellular location is the cell membrane. The enzyme catalyses Fe(II)-heme o + 2 A + H2O = Fe(II)-heme a + 2 AH2. It participates in porphyrin-containing compound metabolism; heme A biosynthesis; heme A from heme O: step 1/1. Catalyzes the conversion of heme O to heme A by two successive hydroxylations of the methyl group at C8. The first hydroxylation forms heme I, the second hydroxylation results in an unstable dihydroxymethyl group, which spontaneously dehydrates, resulting in the formyl group of heme A. This is Heme A synthase from Bradyrhizobium diazoefficiens (strain JCM 10833 / BCRC 13528 / IAM 13628 / NBRC 14792 / USDA 110).